Here is a 103-residue protein sequence, read N- to C-terminus: Small ribosomal subunit protein uS10 (103 aa).

This sequence belongs to the universal ribosomal protein uS10 family. Part of the 30S ribosomal subunit.

Its function is as follows. Involved in the binding of tRNA to the ribosomes. This Polynucleobacter asymbioticus (strain DSM 18221 / CIP 109841 / QLW-P1DMWA-1) (Polynucleobacter necessarius subsp. asymbioticus) protein is Small ribosomal subunit protein uS10.